A 329-amino-acid polypeptide reads, in one-letter code: Phosphate acyltransferase (329 aa).

It belongs to the PlsX family. Homodimer. Probably interacts with PlsY.

The protein localises to the cytoplasm. It catalyses the reaction a fatty acyl-[ACP] + phosphate = an acyl phosphate + holo-[ACP]. It functions in the pathway lipid metabolism; phospholipid metabolism. Its function is as follows. Catalyzes the reversible formation of acyl-phosphate (acyl-PO(4)) from acyl-[acyl-carrier-protein] (acyl-ACP). This enzyme utilizes acyl-ACP as fatty acyl donor, but not acyl-CoA. The chain is Phosphate acyltransferase from Campylobacter lari (strain RM2100 / D67 / ATCC BAA-1060).